We begin with the raw amino-acid sequence, 163 residues long: Probable ribosome biogenesis protein RLP24 (163 aa).

The protein belongs to the eukaryotic ribosomal protein eL24 family. Associated with nucleolar and cytoplasmic pre-60S particles. At the end of biogenesis it dissociates from cytoplasmic pre-60S particles and is likely to be exchanged for its ribosomal homolog, RPL24.

The protein resides in the nucleus. It is found in the nucleolus. Functionally, involved in the biogenesis of the 60S ribosomal subunit. Ensures the docking of GTPBP4/NOG1 to pre-60S particles. The sequence is that of Probable ribosome biogenesis protein RLP24 (RSL24D1) from Bos taurus (Bovine).